Consider the following 219-residue polypeptide: Protein DMP5 (219 aa).

Positions M1 to P24 are disordered. A run of 4 helical transmembrane segments spans residues L51–T71, F82–D102, M142–L162, and V182–P202.

This sequence belongs to the plant DMP1 protein family.

The protein resides in the endoplasmic reticulum membrane. Its function is as follows. Involved in membrane remodeling. The chain is Protein DMP5 from Arabidopsis thaliana (Mouse-ear cress).